A 499-amino-acid chain; its full sequence is Glutamyl-tRNA(Gln) amidotransferase subunit B, chloroplastic/mitochondrial (499 aa).

This sequence belongs to the GatB/GatE family. GatB subfamily. As to quaternary structure, subunit of the heterotrimeric GatCAB amidotransferase (AdT) complex, composed of A, B and C subunits.

Its subcellular location is the mitochondrion. It is found in the plastid. It localises to the chloroplast. The catalysed reaction is L-glutamyl-tRNA(Gln) + L-glutamine + ATP + H2O = L-glutaminyl-tRNA(Gln) + L-glutamate + ADP + phosphate + H(+). Functionally, allows the formation of correctly charged Gln-tRNA(Gln) through the transamidation of misacylated Glu-tRNA(Gln) in chloroplasts and mitochondria. The reaction takes place in the presence of glutamine and ATP through an activated gamma-phospho-Glu-tRNA(Gln). This chain is Glutamyl-tRNA(Gln) amidotransferase subunit B, chloroplastic/mitochondrial, found in Ostreococcus lucimarinus (strain CCE9901).